Reading from the N-terminus, the 318-residue chain is Ubiquinol oxidase (318 aa).

A helical membrane pass occupies residues 150–170 (VVVLETVAAIPGMVGGMFRHL). Residues glutamate 154, glutamate 193, and histidine 196 each contribute to the Fe cation site. A helical membrane pass occupies residues 212 to 232 (MLIKLGQFLFFNGYMVFYFVA). Residues glutamate 244, glutamate 295, and histidine 298 each contribute to the Fe cation site.

This sequence belongs to the alternative oxidase family. In terms of assembly, found as monomers and homodimers. Fe cation serves as cofactor.

It is found in the mitosome membrane. The enzyme catalyses 2 a ubiquinol + O2 = 2 a ubiquinone + 2 H2O. Its function is as follows. Alternative oxidase which function may be to reoxidize reducing equivalents produced by glycolysis such as ubiquinol. The polypeptide is Ubiquinol oxidase (AOX) (Trachipleistophora hominis (Microsporidian parasite)).